The following is a 296-amino-acid chain: Beta-lactamase (296 aa).

Positions 1 to 21 (MKAYFIAILTLFTCIATVVRA) are cleaved as a signal peptide. Serine 66 functions as the Acyl-ester intermediate in the catalytic mechanism. 235–237 (KTG) is a substrate binding site.

The protein belongs to the class-A beta-lactamase family.

The catalysed reaction is a beta-lactam + H2O = a substituted beta-amino acid. The protein is Beta-lactamase (cblA) of Bacteroides uniformis.